The sequence spans 265 residues: Apolipoprotein A-I (265 aa).

Residues 1 to 16 (MKAAVLIWLFLMGSQA) form the signal peptide. Tandem repeats lie at residues 66–87 (LKLLDNWDSLTSTVNKLREQLG) and 88–109 (PVTQEFWDNLEKETEELRQEMS). A 10 X approximate tandem repeats region spans residues 66-265 (LKLLDNWDSL…EEYTKKLSSQ (200 aa)). The residue at position 108 (M108) is a Methionine sulfoxide. One copy of the 3; half-length repeat lies at 110–120 (KDLEEVKAQVQ). 5 consecutive repeat copies span residues 121-142 (PYLDNFQKNWQEEMNLYSQKLE), 143-164 (PLRTELQEGALQKLQDLQEKLS), 165-186 (PLAEQVRDRARAHVNTLRTQLA), 187-208 (PYSDELRQRLATRLEALKENSG), and 209-230 (ASLAEYHAKASEHLSALGEKAK). Methionine sulfoxide is present on M134. One copy of the 9; half-length repeat lies at 231–241 (PALDDLRQGLL). Copy 10 of the repeat occupies 242–265 (PVLESFKVSFLSALEEYTKKLSSQ).

This sequence belongs to the apolipoprotein A1/A4/E family. As to quaternary structure, homodimer. Interacts with APOA1BP and CLU. Component of a sperm activating protein complex (SPAP), consisting of APOA1, an immunoglobulin heavy chain, an immunoglobulin light chain and albumin. Interacts with NDRG1. Interacts with SCGB3A2. Interacts with NAXE and YJEFN3. Glycosylated. Post-translationally, palmitoylated. In terms of processing, phosphorylation sites are present in the extracellular medium.

It localises to the secreted. Participates in the reverse transport of cholesterol from tissues to the liver for excretion by promoting cholesterol efflux from tissues and by acting as a cofactor for the lecithin cholesterol acyltransferase (LCAT). As part of the SPAP complex, activates spermatozoa motility. This is Apolipoprotein A-I (APOA1) from Aotus nancymaae (Ma's night monkey).